We begin with the raw amino-acid sequence, 337 residues long: Palmitoyltransferase ZDHHC15 (337 aa).

The Cytoplasmic segment spans residues 1 to 20 (MRRGWKMALSGGLRCCRRVL). Residues 21–41 (SWVPVLVIVLVVLWSYYAYVF) form a helical membrane-spanning segment. The Lumenal segment spans residues 42–56 (ELCLVTVLSPAEKVI). The chain crosses the membrane as a helical span at residues 57–77 (YLILYHAIFVFFTWTYWKSIF). Topologically, residues 78 to 172 (TLPQQPNQKF…NNCIGFSNYK (95 aa)) are cytoplasmic. In terms of domain architecture, DHHC spans 129–179 (RFCDRCHLIKPDRCHHCSVCAMCVLKMDHHCPWVNNCIGFSNYKFFLQFLA). Zn(2+)-binding residues include Cys-131, Cys-134, His-144, Cys-145, Cys-148, Cys-151, and His-158. Cys-159 acts as the S-palmitoyl cysteine intermediate in catalysis. Cys-165 is a Zn(2+) binding site. Residues 173-193 (FFLQFLAYSVLYCLYIATTVF) form a helical membrane-spanning segment. The Lumenal segment spans residues 194-210 (SYFIKYWRGELPSVRSK). Residues 211–234 (FHVLFLLFVACMFFVSLVILFGYH) form a helical membrane-spanning segment. Residues 235–337 (CWLVSRNKTT…SSSLAVETET (103 aa)) lie on the Cytoplasmic side of the membrane. Residues 306 to 337 (PLLANEETWEDNEDDNQDYPEGSSSLAVETET) are disordered. Acidic residues predominate over residues 312–323 (ETWEDNEDDNQD). Polar residues predominate over residues 327-337 (GSSSLAVETET).

It belongs to the DHHC palmitoyltransferase family. In terms of processing, autopalmitoylated (in vitro). As to expression, expressed in placenta, liver, lung, kidney, heart and brain.

It localises to the golgi apparatus membrane. The protein resides in the postsynaptic density. It carries out the reaction L-cysteinyl-[protein] + hexadecanoyl-CoA = S-hexadecanoyl-L-cysteinyl-[protein] + CoA. The enzyme catalyses L-cysteinyl-[protein] + tetradecanoyl-CoA = S-tetradecanoyl-L-cysteinyl-[protein] + CoA. It catalyses the reaction L-cysteinyl-[protein] + octadecanoyl-CoA = S-octadecanoyl-L-cysteinyl-[protein] + CoA. Its function is as follows. Palmitoyltransferase that catalyzes the addition of palmitate onto various protein substrates. Has no stringent fatty acid selectivity and in addition to palmitate can also transfer onto target proteins myristate from tetradecanoyl-CoA and stearate from octadecanoyl-CoA. Palmitoylates IGF2R and SORT1, promoting their partitioning to an endosomal membrane subdomain where they can interact with the retromer cargo-selective complex. Thereby, regulates retrograde transport from endosomes to the Golgi apparatus of these lysosomal sorting receptors and plays a role in trafficking of lysosomal proteins. In the nervous system, catalyzes the palmitoylation of DLG4/PSD95 and regulates its synaptic clustering and function in synaptogenesis. Could be involved in the differentiation of dopaminergic neurons and the development of the diencephalon. Could also catalyze the palmitoylation of GAP43. Could also palmitoylate DNAJC5 and regulate its localization to the Golgi membrane. Could also palmitoylate FYN as shown in vitro. May palmitoylate CALHM3 subunit of gustatory voltage-gated ion channels and modulate channel gating and kinetics. This is Palmitoyltransferase ZDHHC15 from Homo sapiens (Human).